The sequence spans 181 residues: Dual-action ribosomal maturation protein DarP (181 aa).

Residues 1–23 (MTGIKKPMSQYQDDNELEDWGPS) are disordered.

This sequence belongs to the DarP family.

Its subcellular location is the cytoplasm. Its function is as follows. Member of a network of 50S ribosomal subunit biogenesis factors which assembles along the 30S-50S interface, preventing incorrect 23S rRNA structures from forming. Promotes peptidyl transferase center (PTC) maturation. The chain is Dual-action ribosomal maturation protein DarP from Aeromonas salmonicida (strain A449).